The sequence spans 411 residues: Potassium channel subfamily K member 3 (411 aa).

Topologically, residues 1–8 (MKRQNVRT) are cytoplasmic. A helical transmembrane segment spans residues 9–29 (LALIVCTFTYLLVGAAVFDAL). Asn53 carries an N-linked (GlcNAc...) asparagine glycan. Residues 78–101 (WRFAGSFYFAITVITTIGYGHAAP) constitute an intramembrane region (pore-forming). A helical transmembrane segment spans residues 108–128 (VFCMFYALLGIPLTLVMFQSL). The Cytoplasmic portion of the chain corresponds to 129–158 (GERINTFVRYLLHRAKRGLGMRHAEVSMAN). Residues 159–179 (MVLIGFVSCISTLCIGAAAFS) traverse the membrane as a helical segment. Positions 184-207 (WTFFQAYYYCFITLTTIGFGDYVA) form an intramembrane region, pore-forming. The helical transmembrane segment at 223–243 (FSFVYILTGLTVIGAFLNLVV) threads the bilayer. Residues 244-411 (LRFMTMNAED…RGLMKRRSSV (168 aa)) lie on the Cytoplasmic side of the membrane.

The protein belongs to the two pore domain potassium channel (TC 1.A.1.8) family. Homodimer. Heterodimer with KCNK1. Heterodimer with KCNK9. Strongest expression in heart. Moderate expression in lung and brain. Low levels in liver, kidney and skeletal muscle. Expressed in cerebellar granule cells (at protein level).

The protein localises to the cell membrane. The catalysed reaction is K(+)(in) = K(+)(out). It catalyses the reaction Na(+)(in) = Na(+)(out). With respect to regulation, inhibited by extracellular acidification, muscarinic signaling, divalent metal cations Zn(2+) and Ba(2+), isoflurane, bupivacaine and phenytoin. Activated by protein kinase A. Ruthenium red resistant. K(+) channel that conducts voltage-dependent outward rectifying currents upon membrane depolarization. Voltage sensing is coupled to K(+) electrochemical gradient in an 'ion flux gating' mode where outward but not inward ion flow opens the gate. Changes ion selectivity and becomes permeable to Na(+) ions in response to extracellular acidification. Protonation of the pH sensor His-98 stabilizes C-type inactivation conformation likely converting the channel from outward K(+)-conducting, to inward Na(+)-conducting to nonconductive state. Homo- and heterodimerizes to form functional channels with distinct regulatory and gating properties. Allows K(+) currents with fast-gating kinetics important for the repolarization and hyperpolarization phases of action potentials. In cerebellar granule cells, heteromeric KCNK3:KCNK9 channel may hyperpolarize the resting membrane potential to limit intrinsic neuronal excitability, but once the action potential threshold is reached, it may support high-frequency action potential firing and increased neuronal excitability. Dispensable for central chemosensory respiration i.e. breathing controlled by brainstem CO2/pH, it rather conducts pH-sensitive currents and controls the firing rate of serotonergic raphe neurons involved in potentiation of the respiratory chemoreflex. Additionally, imparts chemosensitivity to type 1 cells in carotid bodies which respond to a decrease in arterial oxygen pressure or an increase in carbon dioxide pressure or pH to initiate adaptive changes in pulmonary ventilation. In adrenal gland, contributes to the maintenance of a hyperpolarized resting membrane potential of aldosterone-producing cells at zona glomerulosa and limits aldosterone release as part of a regulatory mechanism that controls arterial blood pressure and electrolyte homeostasis. In brown adipocytes, mediates K(+) efflux that counteracts norepinephrine-induced membrane depolarization, limits Ca(2+) efflux and downstream cAMP and PKA signaling, ultimately attenuating lipid oxidation and adaptive thermogenesis. This Rattus norvegicus (Rat) protein is Potassium channel subfamily K member 3.